Consider the following 31-residue polypeptide: Photosystem II reaction center protein T (31 aa).

Residues 3–23 (SVAYILILTMALAVLFFAIAF) form a helical membrane-spanning segment.

The protein belongs to the PsbT family. In terms of assembly, PSII is composed of 1 copy each of membrane proteins PsbA, PsbB, PsbC, PsbD, PsbE, PsbF, PsbH, PsbI, PsbJ, PsbK, PsbL, PsbM, PsbT, PsbX, PsbY, PsbZ, Psb30/Ycf12, peripheral proteins PsbO, CyanoQ (PsbQ), PsbU, PsbV and a large number of cofactors. It forms dimeric complexes.

The protein localises to the cellular thylakoid membrane. Found at the monomer-monomer interface of the photosystem II (PS II) dimer, plays a role in assembly and dimerization of PSII. PSII is a light-driven water plastoquinone oxidoreductase, using light energy to abstract electrons from H(2)O, generating a proton gradient subsequently used for ATP formation. The protein is Photosystem II reaction center protein T of Gloeothece citriformis (strain PCC 7424) (Cyanothece sp. (strain PCC 7424)).